Consider the following 507-residue polypeptide: ATP synthase subunit alpha, chloroplastic (507 aa).

170-177 (IGDRQTGK) is an ATP binding site.

This sequence belongs to the ATPase alpha/beta chains family. In terms of assembly, F-type ATPases have 2 components, CF(1) - the catalytic core - and CF(0) - the membrane proton channel. CF(1) has five subunits: alpha(3), beta(3), gamma(1), delta(1), epsilon(1). CF(0) has four main subunits: a, b, b' and c.

Its subcellular location is the plastid. It localises to the chloroplast thylakoid membrane. It catalyses the reaction ATP + H2O + 4 H(+)(in) = ADP + phosphate + 5 H(+)(out). In terms of biological role, produces ATP from ADP in the presence of a proton gradient across the membrane. The alpha chain is a regulatory subunit. This is ATP synthase subunit alpha, chloroplastic from Adiantum capillus-veneris (Maidenhair fern).